Consider the following 291-residue polypeptide: MSTKIDGKQIAAEIKTNLAERVNKLKAQGIQPGLGTLLVGEDPGSMKYVAGKHADCQEVGITSVKKELPADASFDDIAAAVRELNEDPACTGFIVQLPLPKGINENAIIDMIDPAKDADGMHPYNLGELVLHVRGDISTPLPCTPRGVLELLDAYDIDLNGKEVCVLGRGITIGRTIGLMLTRNAVNATVTLCHTGTRDVADHMRRADVIVAAMGSAGFVTPDKIKDGAVLVDVGVSRVYDEEAGRYRIKGDVDKACYDKASAYTPNPGGVGPMTRAMLLANVVEMAERHA.

NADP(+)-binding positions include G168–G170, T195, and V236.

It belongs to the tetrahydrofolate dehydrogenase/cyclohydrolase family. As to quaternary structure, homodimer.

It catalyses the reaction (6R)-5,10-methylene-5,6,7,8-tetrahydrofolate + NADP(+) = (6R)-5,10-methenyltetrahydrofolate + NADPH. It carries out the reaction (6R)-5,10-methenyltetrahydrofolate + H2O = (6R)-10-formyltetrahydrofolate + H(+). It participates in one-carbon metabolism; tetrahydrofolate interconversion. Its function is as follows. Catalyzes the oxidation of 5,10-methylenetetrahydrofolate to 5,10-methenyltetrahydrofolate and then the hydrolysis of 5,10-methenyltetrahydrofolate to 10-formyltetrahydrofolate. In Bifidobacterium longum (strain DJO10A), this protein is Bifunctional protein FolD.